An 84-amino-acid polypeptide reads, in one-letter code: Exodeoxyribonuclease 7 small subunit (84 aa).

A disordered region spans residues 65-84; it reads QEGDWTTSPFEPASGEPPGG.

Belongs to the XseB family. As to quaternary structure, heterooligomer composed of large and small subunits.

Its subcellular location is the cytoplasm. The enzyme catalyses Exonucleolytic cleavage in either 5'- to 3'- or 3'- to 5'-direction to yield nucleoside 5'-phosphates.. Bidirectionally degrades single-stranded DNA into large acid-insoluble oligonucleotides, which are then degraded further into small acid-soluble oligonucleotides. In Syntrophobacter fumaroxidans (strain DSM 10017 / MPOB), this protein is Exodeoxyribonuclease 7 small subunit.